The primary structure comprises 132 residues: mRNA interferase toxin YafO (132 aa).

In terms of assembly, probably forms a complex with the antitoxin YafN which inhibits the mRNA interferase activity.

In terms of biological role, toxic component of a type II toxin-antitoxin (TA) system. A translation-dependent mRNA interferase. Overexpression causes cessation of cell growth and inhibits cell proliferation via inhibition of translation; this blockage is overcome by subsequent expression of antitoxin YafN. Overexpression causes cleavage of a number of mRNAs in a ribosome-dependent fashion. YafO binding to the 50S ribosomal subunit in the translation complex induces mRNA cleavage 3' to the region protected by the ribosome; YafO alone is not able to digest mRNA. In Escherichia coli (strain K12), this protein is mRNA interferase toxin YafO (yafO).